The sequence spans 235 residues: tRNA (cytidine-2'-O-)-methyltransferase TrmJ (235 aa).

S-adenosyl-L-methionine contacts are provided by residues 77 to 79, G111, I131, and 138 to 140; these read TSS and PVL.

It belongs to the class IV-like SAM-binding methyltransferase superfamily. RNA methyltransferase TrmH family. Homodimer.

It localises to the cytoplasm. It catalyses the reaction cytidine(32) in tRNA + S-adenosyl-L-methionine = 2'-O-methylcytidine(32) in tRNA + S-adenosyl-L-homocysteine + H(+). Catalyzes the formation of 2'O-methylated cytidine (Cm32) at position 32 in tRNA. Is specific for cytidine. The chain is tRNA (cytidine-2'-O-)-methyltransferase TrmJ from Sulfolobus acidocaldarius (strain ATCC 33909 / DSM 639 / JCM 8929 / NBRC 15157 / NCIMB 11770).